Consider the following 564-residue polypeptide: Hsp70-Hsp90 organising protein (564 aa).

3 TPR repeats span residues 7–40, 42–74, and 76–108; these read AQRL…DPLD, VLYS…KKDW, and KGYI…DPNN. The stretch at 197–239 forms a coiled coil; it reads EGNDAEERQRQQREEEERRKKKEEEERKKKEEEEMKKQNRTPE. Residues 199-247 are disordered; that stretch reads NDAEERQRQQREEEERRKKKEEEERKKKEEEEMKKQNRTPEQIQGDEHK. The segment covering 201-233 has biased composition (basic and acidic residues); it reads AEERQRQQREEEERRKKKEEEERKKKEEEEMKK. 6 TPR repeats span residues 243–276, 278–310, 318–351, 378–411, 413–445, and 446–479; these read GDEH…NPND, MYHY…RYNF, AKLY…DNNR, AEEH…NPND, KLYS…DPTF, and VKAY…DPNN. The STI1 domain maps to 513 to 552; the sequence is DPEIQQIISDPQFQIILQKLNENPNSISEYIKDPKIFNGL.

In terms of assembly, monomer. Homodimer. Forms a complex composed of HOP and chaperones HSP70 and HSP90; the interaction is stronger in the absence of ATP. Interacts (via TPR 1, 2, 3, 7, 8 and 9 repeats) with HSP70 (via C-terminus); the interaction is direct and is stronger in the absence of ATP. Interacts (via TPR 4, 5 and 6 repeats) with HSP90 (via C-terminus); the interaction is direct.

It localises to the cytoplasm. Functionally, acts as a co-chaperone and mediates the association of the chaperones HSP70 and HSP90 probably facilitating substrate transfer from HSP70 to HSP90. Stimulates HSP70 ATPase activity and, in contrast, inhibits HSP90 ATPase activity. This chain is Hsp70-Hsp90 organising protein, found in Plasmodium falciparum (isolate 3D7).